A 237-amino-acid polypeptide reads, in one-letter code: Small ribosomal subunit protein uS3 (237 aa).

In terms of domain architecture, KH type-2 spans 39 to 107 (VRQFLTKELK…PAQINISEVR (69 aa)).

The protein belongs to the universal ribosomal protein uS3 family. As to quaternary structure, part of the 30S ribosomal subunit. Forms a tight complex with proteins S10 and S14.

Binds the lower part of the 30S subunit head. Binds mRNA in the 70S ribosome, positioning it for translation. This Aeromonas hydrophila subsp. hydrophila (strain ATCC 7966 / DSM 30187 / BCRC 13018 / CCUG 14551 / JCM 1027 / KCTC 2358 / NCIMB 9240 / NCTC 8049) protein is Small ribosomal subunit protein uS3.